The sequence spans 153 residues: NADH dehydrogenase [ubiquinone] 1 beta subcomplex subunit 11, mitochondrial (153 aa).

Residues 1–29 constitute a mitochondrion transit peptide; the sequence is MAAGLFGLSARRLLAAAATRGLPAARVRW. Residues 40–76 form a disordered region; it reads PSAVAGKRPPEPTTPWQEDPEPEDENLYEKNPDSHGY. The segment covering 66–76 has biased composition (basic and acidic residues); the sequence is LYEKNPDSHGY. The helical transmembrane segment at 89–109 threads the bilayer; sequence LVFFFGVSIILVLGSTFVAYL.

Belongs to the complex I NDUFB11 subunit family. In terms of assembly, complex I is composed of 45 different subunits. Interacts with BCAP31. As to expression, ubiquitous.

The protein resides in the mitochondrion inner membrane. Its function is as follows. Accessory subunit of the mitochondrial membrane respiratory chain NADH dehydrogenase (Complex I), that is believed not to be involved in catalysis. Complex I functions in the transfer of electrons from NADH to the respiratory chain. The immediate electron acceptor for the enzyme is believed to be ubiquinone. The sequence is that of NADH dehydrogenase [ubiquinone] 1 beta subcomplex subunit 11, mitochondrial (NDUFB11) from Homo sapiens (Human).